The chain runs to 482 residues: Mannan endo-1,4-beta-mannosidase (482 aa).

The signal sequence occupies residues 1–21; the sequence is MARTLRYLLCGILALAAGSNA. The CBM6 domain maps to 42–160; that stretch reads TTYEAEDAIL…WYLVDSITLT (119 aa). Residues N171 and N300 are each glycosylated (N-linked (GlcNAc...) asparagine). One can recognise a GH26 domain in the interval 181-474; sequence ASARALYDYL…YTSDYVLTLD (294 aa). Residue E332 is the Proton donor of the active site. E422 serves as the catalytic Nucleophile.

This sequence belongs to the glycosyl hydrolase 26 family.

The protein localises to the secreted. With respect to regulation, the activity is completely impaired by Ag(+), partially inhibited by Zn(2+), and enhanced by Co(2+), Ni(2+) and Cu(2+) by 22.6, 14.5 and 20.8 %, respectively. Ca(2+), Na(+), Mg(2+), Mn(2+), urea and EDTA do not significantly affect the mannanase activity. In terms of biological role, mannan endo-1,4-beta-mannosidase that exhibits high activity against konjac glucomannan and carob galactomannan, as well as a lower activity toward beta-mannan. Shows no activity against barley beta-glucan, birchwood xylan, and low viscosity carboxymethyl cellulose (CMC). Has the ability to hydrolyze manno-oligosaccharides such as M4 which is degraded slightly to M3 and M1, M5 which is mainly degraded to M4 and M1, and M6 which is mostly hydrolyzed to M4 and M2. Shows no activity toward M2 and M3 manno-oligosaccharides. The polypeptide is Mannan endo-1,4-beta-mannosidase (Thermothelomyces thermophilus (strain ATCC 42464 / BCRC 31852 / DSM 1799) (Sporotrichum thermophile)).